Reading from the N-terminus, the 387-residue chain is Erythronate-4-phosphate dehydrogenase (387 aa).

Residues serine 45 and threonine 67 each contribute to the substrate site. Aspartate 147 serves as a coordination point for NAD(+). Arginine 208 is a catalytic residue. Aspartate 232 is an NAD(+) binding site. Glutamate 237 is an active-site residue. Catalysis depends on histidine 254, which acts as the Proton donor. Glycine 257 serves as a coordination point for NAD(+). Position 258 (tyrosine 258) interacts with substrate.

It belongs to the D-isomer specific 2-hydroxyacid dehydrogenase family. PdxB subfamily. As to quaternary structure, homodimer.

The protein localises to the cytoplasm. It catalyses the reaction 4-phospho-D-erythronate + NAD(+) = (R)-3-hydroxy-2-oxo-4-phosphooxybutanoate + NADH + H(+). It functions in the pathway cofactor biosynthesis; pyridoxine 5'-phosphate biosynthesis; pyridoxine 5'-phosphate from D-erythrose 4-phosphate: step 2/5. Functionally, catalyzes the oxidation of erythronate-4-phosphate to 3-hydroxy-2-oxo-4-phosphonooxybutanoate. The sequence is that of Erythronate-4-phosphate dehydrogenase from Shewanella violacea (strain JCM 10179 / CIP 106290 / LMG 19151 / DSS12).